We begin with the raw amino-acid sequence, 147 residues long: DNA polymerase epsilon subunit 3 (147 aa).

N-acetylalanine is present on A2. T83 carries the phosphothreonine modification. Residues 85 to 146 adopt a coiled-coil conformation; sequence LKEALEAYRR…EEQNEEEEVD (62 aa). Basic and acidic residues predominate over residues 93–124; the sequence is RREQKGKKEASEQKKKDKDKKTDSEEQDKSRD. Residues 93–147 form a disordered region; the sequence is RREQKGKKEASEQKKKDKDKKTDSEEQDKSRDEDNDEDEERLEEEEQNEEEEVDN. S122 carries the phosphoserine modification. Over residues 125-147 the composition is skewed to acidic residues; that stretch reads EDNDEDEERLEEEEQNEEEEVDN.

As to quaternary structure, component of the DNA polymerase epsilon complex consisting of four subunits: the catalytic subunit POLE and the accessory subunits POLE2, POLE3 and POLE4. Interaction with POLE4 is a prerequisite for further binding with POLE and POLE2. Heterodimer with CHRAC1; binds to DNA. Component of the CHRAC ISWI chromatin remodeling complex at least composed of SMARCA5/SNF2H, BAZ1A/ACF1, CHRAC1 and POLE3; the complex preferentially binds DNA through the CHRAC1-POLE3 heterodimer and possesses ATP-dependent nucleosome-remodeling activity. Within the complex, the heterodimer with CHRAC1 interacts with SMARCA5/SNF2H; the interaction is direct and enhances nucleosome sliding activity by the SMARCA5/SNF2H and BAZ1A/ACF1 interaction. Within the complex, the heterodimer with CHRAC1 interacts with BAZ1A/ACF1; the interactions are direct.

It is found in the nucleus. Accessory component of the DNA polymerase epsilon complex. Participates in DNA repair and in chromosomal DNA replication. Forms a complex with CHRAC1 and binds naked DNA, which is then incorporated into chromatin, aided by the nucleosome-remodeling activity of ISWI/SNF2H and ACF1. Does not enhance nucleosome sliding activity of the ACF-5 ISWI chromatin remodeling complex. The polypeptide is DNA polymerase epsilon subunit 3 (POLE3) (Bos taurus (Bovine)).